We begin with the raw amino-acid sequence, 115 residues long: Large ribosomal subunit protein bL20c (115 aa).

The protein belongs to the bacterial ribosomal protein bL20 family.

The protein localises to the plastid. The protein resides in the chloroplast. Binds directly to 23S ribosomal RNA and is necessary for the in vitro assembly process of the 50S ribosomal subunit. It is not involved in the protein synthesizing functions of that subunit. This Pleurastrum terricola (Filamentous green alga) protein is Large ribosomal subunit protein bL20c.